A 1055-amino-acid polypeptide reads, in one-letter code: Inactive exonuclease DIS3L2 (1055 aa).

2 disordered regions span residues 1 to 109 (MKSA…SSPE) and 229 to 249 (SAAK…KARQ). A compositionally biased stretch (basic residues) spans 17–32 (HKKKRNRPQKQNRRSK). The span at 39–59 (EDAHVEESLDGRDSSRSKAKD) shows a compositional bias: basic and acidic residues. Residues 97–108 (PRRSASPLLSSP) show a composition bias toward low complexity. Residues 367-446 (YVQLMPADPR…PQINAILYQN (80 aa)) form the CSD2 domain. One can recognise an RNB domain in the interval 476 to 824 (RKDLRDLCVL…VHRALAAALE (349 aa)). Mg(2+)-binding residues include aspartate 488 and aspartate 497.

Belongs to the RNR ribonuclease family. DIS3L2 subfamily.

The protein resides in the cytoplasm. Functionally, probable inactive 3'-5'-exoribonuclease. Is unable to complement the growth defect of a yeast mutant lacking RRP44 exonuclease. The protein is Inactive exonuclease DIS3L2 of Arabidopsis thaliana (Mouse-ear cress).